A 572-amino-acid polypeptide reads, in one-letter code: MALTISRAQYVATYGPTVGDKVRLGDTNLWATIEQDLLTKGDECKFGGGKSVRDGMAQSGTATRDNPNVLDFVITNVMIIDARLGIIKADIGIRDGRIVGIGQAGNPDTMDNVTPNMIIGASTEVHNGVHLIATAGGIDTHIHFICPQQAQHAIESGVTTLIGGGTGPADGTHATTCTPGAWYMEHMFQAAEALPVNVGFFGKGNCSTLDPLREQIEAGALGLKIHEDWGATPAVIDSALKVADEMDIQVAIHTDTLNESGFLEDTMKAIDGRVIHTFHTEGAGGGHAPDIIKAAMYSNVLPASTNPTRPFTKNTIDEHLDMLMVCHHLDKRVPEDVAFADSRIRPETIAAEDILHDMGVFSIMSSDSQAMGRIGEVVIRTWQTADKMKMQRGELGNEGNDNFRIKRYIAKYTINPAIAHGIAEHIGSLEVGKIADIVLWKPMFFGVKPEVVIKKGFISYAKMGDPNASIPTPQPVFYRPMYGAQGLATAQTAVFFVSQAAEKADIRAKFGLHKETIAVKGCRNVGKKDLVHNDVTPNITVDAERYEVRVDGELITCEPVDSVPLGQRYFLF.

Positions 136–572 (GGIDTHIHFI…VPLGQRYFLF (437 aa)) constitute a Urease domain. H141, H143, and K224 together coordinate Ni(2+). K224 is subject to N6-carboxylysine. H226 contributes to the substrate binding site. Residues H253 and H279 each coordinate Ni(2+). The active-site Proton donor is H327. D367 is a Ni(2+) binding site.

It belongs to the metallo-dependent hydrolases superfamily. Urease alpha subunit family. Heterotrimer of UreA (gamma), UreB (beta) and UreC (alpha) subunits. Three heterotrimers associate to form the active enzyme. Requires Ni cation as cofactor. Carboxylation allows a single lysine to coordinate two nickel ions.

It localises to the cytoplasm. The catalysed reaction is urea + 2 H2O + H(+) = hydrogencarbonate + 2 NH4(+). It participates in nitrogen metabolism; urea degradation; CO(2) and NH(3) from urea (urease route): step 1/1. The sequence is that of Urease subunit alpha from Haemophilus influenzae (strain PittGG).